The sequence spans 208 residues: Uracil phosphoribosyltransferase (208 aa).

5-phospho-alpha-D-ribose 1-diphosphate contacts are provided by residues Arg-78, Arg-103, and 130–138 (DPMLATGGS). Uracil-binding positions include Ile-193 and 198 to 200 (GDA). Residue Asp-199 coordinates 5-phospho-alpha-D-ribose 1-diphosphate.

It belongs to the UPRTase family. Mg(2+) is required as a cofactor.

It carries out the reaction UMP + diphosphate = 5-phospho-alpha-D-ribose 1-diphosphate + uracil. The protein operates within pyrimidine metabolism; UMP biosynthesis via salvage pathway; UMP from uracil: step 1/1. With respect to regulation, allosterically activated by GTP. Functionally, catalyzes the conversion of uracil and 5-phospho-alpha-D-ribose 1-diphosphate (PRPP) to UMP and diphosphate. This chain is Uracil phosphoribosyltransferase, found in Thermus thermophilus (strain ATCC 27634 / DSM 579 / HB8).